The primary structure comprises 342 residues: Ribosomal RNA small subunit methyltransferase C (342 aa).

It belongs to the methyltransferase superfamily. RsmC family. In terms of assembly, monomer.

It localises to the cytoplasm. The enzyme catalyses guanosine(1207) in 16S rRNA + S-adenosyl-L-methionine = N(2)-methylguanosine(1207) in 16S rRNA + S-adenosyl-L-homocysteine + H(+). In terms of biological role, specifically methylates the guanine in position 1207 of 16S rRNA in the 30S particle. The polypeptide is Ribosomal RNA small subunit methyltransferase C (Aeromonas hydrophila subsp. hydrophila (strain ATCC 7966 / DSM 30187 / BCRC 13018 / CCUG 14551 / JCM 1027 / KCTC 2358 / NCIMB 9240 / NCTC 8049)).